Here is a 364-residue protein sequence, read N- to C-terminus: Tyrosine-protein phosphatase YVH1 (364 aa).

The region spanning 11–173 (EVTRILGGIY…LHLFEKMGGD (163 aa)) is the Tyrosine-protein phosphatase domain. Catalysis depends on cysteine 117, which acts as the Phosphocysteine intermediate. At serine 196 the chain carries Phosphoserine.

This sequence belongs to the protein-tyrosine phosphatase family. Non-receptor class dual specificity subfamily.

The catalysed reaction is O-phospho-L-tyrosyl-[protein] + H2O = L-tyrosyl-[protein] + phosphate. In terms of biological role, may be directly involved in signal transduction and/or cell cycle regulation. It is necessary for maintaining growth rate or spore germination. Could show both activity toward tyrosine-protein phosphate as well as with serine-protein phosphate. This Saccharomyces cerevisiae (strain ATCC 204508 / S288c) (Baker's yeast) protein is Tyrosine-protein phosphatase YVH1 (YVH1).